The chain runs to 536 residues: Pentatricopeptide repeat-containing protein At2g06000 (536 aa).

PPR repeat units follow at residues 102 to 136, 137 to 167, 170 to 200, 205 to 239, 240 to 274, 276 to 310, 311 to 345, 346 to 380, 381 to 415, 416 to 450, 451 to 485, and 486 to 523; these read SFWT…GVSP, NNRL…SFEV, CCMV…HLRF, DTKT…GCEP, DIVT…SVCS, DVVT…GIYP, TNVT…GCFP, DVVT…GMFP, NAFT…DIIP, QPFM…KCKP, DKIT…GCSP, and DKIT…NVVP.

It belongs to the PPR family. P subfamily.

In Arabidopsis thaliana (Mouse-ear cress), this protein is Pentatricopeptide repeat-containing protein At2g06000.